The chain runs to 381 residues: 3-dehydroquinate synthase (381 aa).

NAD(+) contacts are provided by residues 81 to 86 (EGEVSK), 115 to 119 (GVVGD), 139 to 140 (TS), K152, and K161. 3 residues coordinate Zn(2+): E194, H256, and H274.

It belongs to the sugar phosphate cyclases superfamily. Dehydroquinate synthase family. Co(2+) serves as cofactor. The cofactor is Zn(2+). It depends on NAD(+) as a cofactor.

The protein localises to the cytoplasm. The enzyme catalyses 7-phospho-2-dehydro-3-deoxy-D-arabino-heptonate = 3-dehydroquinate + phosphate. It functions in the pathway metabolic intermediate biosynthesis; chorismate biosynthesis; chorismate from D-erythrose 4-phosphate and phosphoenolpyruvate: step 2/7. Its function is as follows. Catalyzes the conversion of 3-deoxy-D-arabino-heptulosonate 7-phosphate (DAHP) to dehydroquinate (DHQ). The polypeptide is 3-dehydroquinate synthase (Rhodopseudomonas palustris (strain BisA53)).